A 166-amino-acid polypeptide reads, in one-letter code: P2Y purinoceptor 2 (166 aa).

Topologically, residues 1 to 24 (VHRCLGVLRPLHSLRWGRARYARR) are cytoplasmic. A helical membrane pass occupies residues 25 to 45 (VAAVVWVLVLACQAPVLYFVT). Over 46 to 72 (TSVRGTRITCHDTSARELFSHFVAYSS) the chain is Extracellular. A helical transmembrane segment spans residues 73 to 93 (VMLSLLFAVPFSVILVCYVLM). Over 94 to 115 (ARRLLKPAYGTTGGLPRAKRKS) the chain is Cytoplasmic. A helical membrane pass occupies residues 116-136 (VRTIALVLAVFTLCFLPFHVT). Over 137 to 159 (RTLYYSFRSLDLSCHTLNAINMA) the chain is Extracellular. Residues 160–166 (YKITRPL) traverse the membrane as a helical segment.

Belongs to the G-protein coupled receptor 1 family.

The protein resides in the cell membrane. Its function is as follows. Receptor for ATP and UTP coupled to G-proteins that activate a phosphatidylinositol-calcium second messenger system. The sequence is that of P2Y purinoceptor 2 (P2RY2) from Cricetulus griseus (Chinese hamster).